The primary structure comprises 304 residues: Cell surface-binding protein OPG105 (304 aa).

In terms of domain architecture, Alpha-carbonic anhydrase spans Met1–Gly235. Topologically, residues Met1 to Thr275 are virion surface. The chain crosses the membrane as a helical span at residues Phe276–Met294. Residues Ser295–Asn304 lie on the Intravirion side of the membrane.

Belongs to the alpha-carbonic anhydrase family. As to quaternary structure, homodimer; disulfide-linked. Post-translationally, apparently non-glycosylated.

It localises to the virion membrane. Functionally, binds to chondroitin sulfate on the cell surface to provide virion attachment to target cell. The polypeptide is Cell surface-binding protein OPG105 (OPG105) (Bos taurus (Bovine)).